Reading from the N-terminus, the 1168-residue chain is MLEGRILAVSSQTKAVSGIPGAPKRVSFAKIREPLEVPGLLDVQTDSFEWLIGAQSWRERAAARGDSAISGGLEDILAELSPIEDFSGSMSLSFSDPRFDEVKASTDECKDKDMTYAAPLFVTAEFINNNTGEIKSQTVFMGDFPMMTDKGTFIINGTERVVVSQLVRSPGVYFDHSVDKGTEKDLHSVKVIPGRGAWLEFDVDKRDTVGVRIDRKRRQPVTVLLKALGWTTEQITERFGFSEILMATLEKDNTAGTDEALLDIYRKLRPGEPPTKESAQTLLENLFFKDKRYDLARVGRYKINKKLGLNLGQPIVASTLTEEDIVATIEYLVRLHAGDTEMTAPGGSAVPVEVDDIDHFGNRRLRTVGELIQNQIRVGLSRMERVVRERMTTQDVEAITPQTLINIRPVVAAIKEFFGTSQLSQFMDQNNPLSGLTHKRRLSALGPGGLSRERAGLEVRDVHPSHYGRMCPIETPEGPNIGLIGSLSVYARVNPFGFIETPYRKVENGQVTDQVDYLTADEEDRHVVAQANSALDANGHFTDDRILVRRKGGEVEFVSSAEIDYMDVSPRQMVSVATAMIPFLEHDDANRALMGANMQRQAVPLVRSEAPLVGTGMELRAAVDAGDVIVTEKTGVVEEVSADYVTVMADDGSRKTYRMRKFARSNQGTCANQRPIVDEGQRVEFGQVLADGPCTENGEMALGKNLLVAIMPWEGHNYEDAIILSQRLVEEDVLTSIHIEEHEIDARDTKLGAEEITRDIPNVSDEVLADLDERGIIRIGAEVRDGDVLVGKVTPKGETELTPEERLLRAIFGEKAREVRDTSLKVPHGETGKVIGIRVFSRDDDDDLPPGVNELVRVYVAQKRKIQDGDKLAGRHGNKGVIGKILPQEDMPFLPDGTPVDIILNTHGVPRRMNIGQILETHLGWIGKTGWNVQIAGDGSRPDWAEQLPEEMLSAPADSNIATPVFDGAKEDELTGLLGSTLPNRDGEVMVASDGKATLFDGRSGEPFPYPVSVGYMYIIKLHHLVDDKIHARSTGPYSMITQQPLGGKAQFGGQRFGEMECWAMQAYGAAYTLQELLTIKSDDVVGRVKVYEAIVKGENIPEPGIPESFKVLLKELQSLCLNVEVLSSDGAAIAMADGDDEDLERAAANLGINLSRNEAATVDDLAN.

It belongs to the RNA polymerase beta chain family. In terms of assembly, the RNAP catalytic core consists of 2 alpha, 1 beta, 1 beta' and 1 omega subunit. When a sigma factor is associated with the core the holoenzyme is formed, which can initiate transcription.

It catalyses the reaction RNA(n) + a ribonucleoside 5'-triphosphate = RNA(n+1) + diphosphate. In terms of biological role, DNA-dependent RNA polymerase catalyzes the transcription of DNA into RNA using the four ribonucleoside triphosphates as substrates. The polypeptide is DNA-directed RNA polymerase subunit beta (Rhodococcus jostii (strain RHA1)).